Reading from the N-terminus, the 475-residue chain is 3-keto-steroid reductase ERG27 (475 aa).

Positions 32, 55, 59, and 65 each coordinate NADP(+). Catalysis depends on proton donor residues Ser249 and Tyr272. Positions 272, 276, 324, and 326 each coordinate NADP(+). Lys276 serves as the catalytic Lowers pKa of active site Tyr.

The protein belongs to the short-chain dehydrogenases/reductases (SDR) family. ERG27 subfamily. Heterotetramer of ERG25, ERG26, ERG27 and ERG28. ERG28 acts as a scaffold to tether ERG27 and other 4,4-demethylation-related enzymes, forming a demethylation enzyme complex, in the endoplasmic reticulum.

It localises to the endoplasmic reticulum membrane. The protein localises to the lipid droplet. It functions in the pathway steroid metabolism; ergosterol biosynthesis. Functionally, 3-keto-steroid reductase; part of the third module of ergosterol biosynthesis pathway that includes the late steps of the pathway. ERG27 is a catalytic component of the C-4 demethylation complex that catalyzes the conversion of 4,4-dimethylfecosterol into fecosterol via 4-methylfecosterol. The third module or late pathway involves the ergosterol synthesis itself through consecutive reactions that mainly occur in the endoplasmic reticulum (ER) membrane. Firstly, the squalene synthase ERG9 catalyzes the condensation of 2 farnesyl pyrophosphate moieties to form squalene, which is the precursor of all steroids. Squalene synthase is crucial for balancing the incorporation of farnesyl diphosphate (FPP) into sterol and nonsterol isoprene synthesis. Secondly, squalene is converted into lanosterol by the consecutive action of the squalene epoxidase ERG1 and the lanosterol synthase ERG7. Then, the delta(24)-sterol C-methyltransferase ERG6 methylates lanosterol at C-24 to produce eburicol. Eburicol is the substrate of the sterol 14-alpha demethylase encoded by CYP51A, CYP51B and CYP51C, to yield 4,4,24-trimethyl ergosta-8,14,24(28)-trienol. CYP51B encodes the enzyme primarily responsible for sterol 14-alpha-demethylation, and plays an essential role in ascospore formation. CYP51A encodes an additional sterol 14-alpha-demethylase, induced on ergosterol depletion and responsible for the intrinsic variation in azole sensitivity. The third CYP51 isoform, CYP51C, does not encode a sterol 14-alpha-demethylase, but is required for full virulence on host wheat ears. The C-14 reductase ERG24 then reduces the C14=C15 double bond which leads to 4,4-dimethylfecosterol. A sequence of further demethylations at C-4, involving the C-4 demethylation complex containing the C-4 methylsterol oxidases ERG25, the sterol-4-alpha-carboxylate 3-dehydrogenase ERG26 and the 3-keto-steroid reductase ERG27, leads to the production of fecosterol via 4-methylfecosterol. ERG28 has a role as a scaffold to help anchor ERG25, ERG26 and ERG27 to the endoplasmic reticulum. The C-8 sterol isomerase ERG2 then catalyzes the reaction which results in unsaturation at C-7 in the B ring of sterols and thus converts fecosterol to episterol. The sterol-C5-desaturases ERG3A and ERG3BB then catalyze the introduction of a C-5 double bond in the B ring to produce 5-dehydroepisterol. The C-22 sterol desaturases ERG5A and ERG5B further convert 5-dehydroepisterol into ergosta-5,7,22,24(28)-tetraen-3beta-ol by forming the C-22(23) double bond in the sterol side chain. Finally, ergosta-5,7,22,24(28)-tetraen-3beta-ol is substrate of the C-24(28) sterol reductase ERG4 to produce ergosterol. The polypeptide is 3-keto-steroid reductase ERG27 (Gibberella zeae (strain ATCC MYA-4620 / CBS 123657 / FGSC 9075 / NRRL 31084 / PH-1) (Wheat head blight fungus)).